An 89-amino-acid chain; its full sequence is Large ribosomal subunit protein uL24 (89 aa).

Belongs to the universal ribosomal protein uL24 family. As to quaternary structure, part of the 50S ribosomal subunit.

One of two assembly initiator proteins, it binds directly to the 5'-end of the 23S rRNA, where it nucleates assembly of the 50S subunit. Functionally, one of the proteins that surrounds the polypeptide exit tunnel on the outside of the subunit. The protein is Large ribosomal subunit protein uL24 of Chlorobium chlorochromatii (strain CaD3).